Reading from the N-terminus, the 274-residue chain is 2-dehydro-3-deoxyphosphooctonate aldolase (274 aa).

The protein belongs to the KdsA family.

It is found in the cytoplasm. The enzyme catalyses D-arabinose 5-phosphate + phosphoenolpyruvate + H2O = 3-deoxy-alpha-D-manno-2-octulosonate-8-phosphate + phosphate. Its pathway is carbohydrate biosynthesis; 3-deoxy-D-manno-octulosonate biosynthesis; 3-deoxy-D-manno-octulosonate from D-ribulose 5-phosphate: step 2/3. The protein operates within bacterial outer membrane biogenesis; lipopolysaccharide biosynthesis. In Rickettsia felis (strain ATCC VR-1525 / URRWXCal2) (Rickettsia azadi), this protein is 2-dehydro-3-deoxyphosphooctonate aldolase.